We begin with the raw amino-acid sequence, 466 residues long: Glutamate--tRNA ligase 1 (466 aa).

The 'HIGH' region signature appears at 10–20; the sequence is PSPTGLIHLGN. 4 residues coordinate Zn(2+): cysteine 103, cysteine 105, cysteine 130, and histidine 132. A 'KMSKS' region motif is present at residues 247 to 251; sequence PLSKR. Residue lysine 250 coordinates ATP.

It belongs to the class-I aminoacyl-tRNA synthetase family. Glutamate--tRNA ligase type 1 subfamily. As to quaternary structure, monomer. Requires Zn(2+) as cofactor.

It is found in the cytoplasm. The catalysed reaction is tRNA(Glu) + L-glutamate + ATP = L-glutamyl-tRNA(Glu) + AMP + diphosphate. Its function is as follows. Catalyzes the attachment of glutamate to tRNA(Glu) in a two-step reaction: glutamate is first activated by ATP to form Glu-AMP and then transferred to the acceptor end of tRNA(Glu). The polypeptide is Glutamate--tRNA ligase 1 (Methylococcus capsulatus (strain ATCC 33009 / NCIMB 11132 / Bath)).